The following is a 396-amino-acid chain: L-lactate dehydrogenase (396 aa).

The FMN hydroxy acid dehydrogenase domain maps to 1–380 (MIISAASDYR…TQDSLVQGLG (380 aa)). Residue Tyr-24 participates in substrate binding. Positions 106 and 127 each coordinate FMN. Tyr-129 provides a ligand contact to substrate. Thr-155 lines the FMN pocket. Arg-164 provides a ligand contact to substrate. Lys-251 lines the FMN pocket. The active-site Proton acceptor is His-275. Arg-278 contributes to the substrate binding site. An FMN-binding site is contributed by 306–330 (DSGIRNGLDVVRMIALGADTVLLGR).

This sequence belongs to the FMN-dependent alpha-hydroxy acid dehydrogenase family. It depends on FMN as a cofactor.

The protein localises to the cell inner membrane. The enzyme catalyses (S)-lactate + A = pyruvate + AH2. Functionally, catalyzes the conversion of L-lactate to pyruvate. Is coupled to the respiratory chain. The polypeptide is L-lactate dehydrogenase (Escherichia coli O127:H6 (strain E2348/69 / EPEC)).